The following is a 291-amino-acid chain: N-acetylmannosamine kinase (291 aa).

ATP is bound by residues 5–12 (AIDIGGTK) and 132–139 (GVGGGVVS). Positions 156, 166, 168, and 173 each coordinate Zn(2+).

This sequence belongs to the ROK (NagC/XylR) family. NanK subfamily. Homodimer.

The catalysed reaction is an N-acyl-D-mannosamine + ATP = an N-acyl-D-mannosamine 6-phosphate + ADP + H(+). It participates in amino-sugar metabolism; N-acetylneuraminate degradation; D-fructose 6-phosphate from N-acetylneuraminate: step 2/5. Functionally, catalyzes the phosphorylation of N-acetylmannosamine (ManNAc) to ManNAc-6-P. This chain is N-acetylmannosamine kinase, found in Escherichia coli (strain ATCC 8739 / DSM 1576 / NBRC 3972 / NCIMB 8545 / WDCM 00012 / Crooks).